The following is a 709-amino-acid chain: Polyribonucleotide nucleotidyltransferase (709 aa).

Residues Asp486 and Asp492 each contribute to the Mg(2+) site. In terms of domain architecture, KH spans 553–612 (PRIHTIKINPDKIKDVIGKGGSVIRALTEETGTTIEIEDDGTVKIAATDGEKAKHAISRI). The 69-residue stretch at 622–690 (GRIYAGKVTR…RQGRVRLSIK (69 aa)) folds into the S1 motif domain.

This sequence belongs to the polyribonucleotide nucleotidyltransferase family. Component of the RNA degradosome, which is a multiprotein complex involved in RNA processing and mRNA degradation. Mg(2+) serves as cofactor.

The protein localises to the cytoplasm. It carries out the reaction RNA(n+1) + phosphate = RNA(n) + a ribonucleoside 5'-diphosphate. Its function is as follows. Involved in mRNA degradation. Catalyzes the phosphorolysis of single-stranded polyribonucleotides processively in the 3'- to 5'-direction. In Photorhabdus luminescens (Xenorhabdus luminescens), this protein is Polyribonucleotide nucleotidyltransferase.